The chain runs to 204 residues: Probable 5-formyltetrahydrofolate cyclo-ligase (204 aa).

5–9 (KNQLR) provides a ligand contact to ATP. Substrate is bound by residues E57, W102, and 140-144 (HGKGY). ATP contacts are provided by residues 139–146 (GHGKGYYD) and D188.

This sequence belongs to the 5-formyltetrahydrofolate cyclo-ligase family.

It catalyses the reaction (6S)-5-formyl-5,6,7,8-tetrahydrofolate + ATP = (6R)-5,10-methenyltetrahydrofolate + ADP + phosphate. In Schizosaccharomyces pombe (strain 972 / ATCC 24843) (Fission yeast), this protein is Probable 5-formyltetrahydrofolate cyclo-ligase.